The following is a 261-amino-acid chain: uncharacterized protein (261 aa).

An N-terminal signal peptide occupies residues M1–G22. C23 is lipidated: N-palmitoyl cysteine. C23 is lipidated: S-diacylglycerol cysteine.

This sequence belongs to the staphylococcal tandem lipoprotein family.

The protein localises to the cell membrane. This is an uncharacterized protein from Staphylococcus aureus (strain Mu50 / ATCC 700699).